We begin with the raw amino-acid sequence, 357 residues long: tRNA pseudouridine synthase Pus10 (357 aa).

The THUMP domain occupies 1–118 (MNLCRECYGI…TFTFELQIRP (118 aa)). The Nucleophile role is filled by D187. Residues Y251 and Y322 each contribute to the substrate site.

It belongs to the pseudouridine synthase Pus10 family.

The enzyme catalyses uridine(54) in tRNA = pseudouridine(54) in tRNA. It carries out the reaction uridine(55) in tRNA = pseudouridine(55) in tRNA. In terms of biological role, responsible for synthesis of pseudouridine from uracil-54 and uracil-55 in the psi GC loop of transfer RNAs. The protein is tRNA pseudouridine synthase Pus10 of Archaeoglobus fulgidus (strain ATCC 49558 / DSM 4304 / JCM 9628 / NBRC 100126 / VC-16).